A 429-amino-acid polypeptide reads, in one-letter code: Aspartate--tRNA(Asp/Asn) ligase (429 aa).

E167 serves as a coordination point for L-aspartate. The aspartate stretch occupies residues 189–192 (QLYK). R210 is an L-aspartate binding site. ATP contacts are provided by residues 210–212 (RAE) and E352. Mg(2+) is bound by residues E352 and S355. L-aspartate-binding residues include S355 and R359. ATP is bound at residue 400–403 (GLAR).

It belongs to the class-II aminoacyl-tRNA synthetase family. Type 2 subfamily. In terms of assembly, homodimer. The cofactor is Mg(2+).

The protein resides in the cytoplasm. The catalysed reaction is tRNA(Asx) + L-aspartate + ATP = L-aspartyl-tRNA(Asx) + AMP + diphosphate. Its function is as follows. Aspartyl-tRNA synthetase with relaxed tRNA specificity since it is able to aspartylate not only its cognate tRNA(Asp) but also tRNA(Asn). Reaction proceeds in two steps: L-aspartate is first activated by ATP to form Asp-AMP and then transferred to the acceptor end of tRNA(Asp/Asn). This Sulfurisphaera tokodaii (strain DSM 16993 / JCM 10545 / NBRC 100140 / 7) (Sulfolobus tokodaii) protein is Aspartate--tRNA(Asp/Asn) ligase.